We begin with the raw amino-acid sequence, 102 residues long: ATP-dependent Clp protease adapter protein ClpS (102 aa).

Belongs to the ClpS family. Binds to the N-terminal domain of the chaperone ClpA.

Its function is as follows. Involved in the modulation of the specificity of the ClpAP-mediated ATP-dependent protein degradation. The sequence is that of ATP-dependent Clp protease adapter protein ClpS from Shewanella woodyi (strain ATCC 51908 / MS32).